A 213-amino-acid polypeptide reads, in one-letter code: Octanoyltransferase (213 aa).

One can recognise a BPL/LPL catalytic domain in the interval 36-211; sequence TNTPDEIWLV…KFCQQLGFKL (176 aa). Substrate is bound by residues 75–82, 142–144, and 155–157; these read RGGQVTYH, SLG, and GLA. Cys173 functions as the Acyl-thioester intermediate in the catalytic mechanism.

This sequence belongs to the LipB family.

It is found in the cytoplasm. The catalysed reaction is octanoyl-[ACP] + L-lysyl-[protein] = N(6)-octanoyl-L-lysyl-[protein] + holo-[ACP] + H(+). The protein operates within protein modification; protein lipoylation via endogenous pathway; protein N(6)-(lipoyl)lysine from octanoyl-[acyl-carrier-protein]: step 1/2. Functionally, catalyzes the transfer of endogenously produced octanoic acid from octanoyl-acyl-carrier-protein onto the lipoyl domains of lipoate-dependent enzymes. Lipoyl-ACP can also act as a substrate although octanoyl-ACP is likely to be the physiological substrate. The protein is Octanoyltransferase of Photorhabdus laumondii subsp. laumondii (strain DSM 15139 / CIP 105565 / TT01) (Photorhabdus luminescens subsp. laumondii).